The chain runs to 126 residues: MARLLLVCLGGALGSGARYLTSAWALRAFGPDFPRGTLLVNVSGSFLLAGIMTASLQSEAVPPDLRLFLAAGVMGGFTTYSSFNYETLALVEQGRLAAAAAYLLATVVGCLVAAFAATLLVRWLAG.

Transmembrane regions (helical) follow at residues 4 to 24 (LLLV…TSAW), 36 to 56 (GTLL…TASL), 67 to 85 (LFLA…SFNY), and 101 to 121 (AYLL…TLLV). 2 residues coordinate Na(+): G75 and T78.

The protein belongs to the fluoride channel Fluc/FEX (TC 1.A.43) family.

The protein localises to the cell inner membrane. The enzyme catalyses fluoride(in) = fluoride(out). Its activity is regulated as follows. Na(+) is not transported, but it plays an essential structural role and its presence is essential for fluoride channel function. Its function is as follows. Fluoride-specific ion channel. Important for reducing fluoride concentration in the cell, thus reducing its toxicity. The chain is Fluoride-specific ion channel FluC from Anaeromyxobacter sp. (strain K).